The sequence spans 230 residues: PKHD-type hydroxylase XF_0598 (230 aa).

The Fe2OG dioxygenase domain maps to 78-182; it reads RTLPPRFNCY…RIASFFWVQS (105 aa). Fe cation is bound by residues His96, Asp98, and His163. Arg173 is a binding site for 2-oxoglutarate.

Fe(2+) serves as cofactor. Requires L-ascorbate as cofactor.

The sequence is that of PKHD-type hydroxylase XF_0598 from Xylella fastidiosa (strain 9a5c).